We begin with the raw amino-acid sequence, 335 residues long: Mycobacterial beta-ketoacyl-[acyl-carrier-protein] synthase III (335 aa).

Active-site residues include Cys-122 and His-258. The tract at residues 259-263 (QANSR) is ACP-binding. Asn-289 is a catalytic residue.

The protein belongs to the thiolase-like superfamily. FabH family. In terms of assembly, homodimer.

The protein localises to the cytoplasm. It carries out the reaction malonyl-[ACP] + dodecanoyl-CoA + H(+) = 3-oxotetradecanoyl-[ACP] + CO2 + CoA. It functions in the pathway lipid metabolism; fatty acid biosynthesis. The protein operates within lipid metabolism; mycolic acid biosynthesis. In terms of biological role, catalyzes the condensation reaction of fatty acid synthesis by the addition to an acyl acceptor of two carbons from malonyl-ACP. Catalyzes the first condensation reaction which initiates fatty acid synthesis and may therefore play a role in governing the total rate of fatty acid production. Possesses both acetoacetyl-ACP synthase and acetyl transacylase activities. Its substrate specificity determines the biosynthesis of branched-chain and/or straight-chain of fatty acids. The protein is Mycobacterial beta-ketoacyl-[acyl-carrier-protein] synthase III of Mycobacterium marinum (strain ATCC BAA-535 / M).